Reading from the N-terminus, the 326-residue chain is tRNA N6-adenosine threonylcarbamoyltransferase (326 aa).

Residues His113 and His117 each contribute to the Fe cation site. Residues 134-138 (VASGG), Asp167, Gly180, and Asn267 each bind substrate. Asp291 is a binding site for Fe cation.

This sequence belongs to the KAE1 / TsaD family. Fe(2+) serves as cofactor.

It localises to the cytoplasm. The catalysed reaction is L-threonylcarbamoyladenylate + adenosine(37) in tRNA = N(6)-L-threonylcarbamoyladenosine(37) in tRNA + AMP + H(+). Its function is as follows. Required for the formation of a threonylcarbamoyl group on adenosine at position 37 (t(6)A37) in tRNAs that read codons beginning with adenine. Is involved in the transfer of the threonylcarbamoyl moiety of threonylcarbamoyl-AMP (TC-AMP) to the N6 group of A37, together with TsaE and TsaB. TsaD likely plays a direct catalytic role in this reaction. The sequence is that of tRNA N6-adenosine threonylcarbamoyltransferase from Thermus thermophilus (strain ATCC 27634 / DSM 579 / HB8).